A 343-amino-acid polypeptide reads, in one-letter code: 2-alkenal reductase (NADP(+)-dependent) (343 aa).

The substrate site is built by Y55 and Y80. Residues 165 to 166 (AV), G186, K190, Y206, N230, C252, Y258, 282 to 284 (FLV), and N332 contribute to the NADP(+) site.

Belongs to the NADP-dependent oxidoreductase L4BD family. In terms of assembly, homodimer.

It catalyses the reaction an n-alkanal + NADP(+) = an alk-2-enal + NADPH + H(+). Reduces the C=C double bonds of alpha, beta unsaturated enones, but has no activity on enones with an endocyclic C=C double-bond. Shows a high specificity for NADPH as the hybrid donor. Substrates are 1-nitrocyclohexene, 2-methylpentenal, trans-cinnamaldehyde, methyl-trans-2-methylcinnamaldehyde, trans-2-nonenal and 1-octen-3-one. Reduced activity with aplha-methyl transcinnamaldehyde, 1-cyclohexene-1-carboxaldehyde, methyl crotonate, (R)-pulegone, and dimethyl itaconate and no activity with maleimides, citral, (5R)- or (5S)-carvone, (S)-perillyl alcohol, and substituted cyclohexenones and cyclopentenones. May also act as a allyl-alcohol dehydrogenase by catalyzing the dehydrogenation of secondary allylic alcohols rather than saturated secondary alcohols. Allyl-alcohol dehydrogenase is specific for the S-stereoisomer of the alcohols. The sequence is that of 2-alkenal reductase (NADP(+)-dependent) (DBR) from Nicotiana tabacum (Common tobacco).